The primary structure comprises 249 residues: Gamma-glutamyl peptidase 3 (249 aa).

The 199-residue stretch at 19 to 217 (SEFVKKTYGG…VDRVLNMKLM (199 aa)) folds into the Glutamine amidotransferase type-1 domain. Cys-103 acts as the Nucleophile in catalysis. Active-site residues include His-196 and Glu-198.

It belongs to the peptidase C26 family.

It localises to the cytoplasm. It is found in the cytosol. The enzyme catalyses an S-[(1E)-1-(hydroxyimino)-omega-(methylsulfanyl)alkyl]-L-glutathione + H2O = an S-[(1E)-1-(hydroxyimino)-omega-(methylsulfanyl)alkyl]-L-cysteinylglycine + L-glutamate. It carries out the reaction (E)-1-(glutathione-S-yl)-2-(1H-indol-3-yl)acetohydroximate + H2O = (E)-1-(glycyl-L-cystein-S-yl)-2-(1H-indol-3-yl)acetohydroximate + L-glutamate. The catalysed reaction is 2-(glutathion-S-yl)-2-(1H-indol-3-yl)acetonitrile + H2O = 2-(glycyl-L-cystein-S-yl)-2-(1H-indol-3-yl)acetonitrile + L-glutamate. It catalyses the reaction (Z)-1-(glutathione-S-yl)-2-phenylacetohydroximate + H2O = (Z)-1-(glycyl-L-cystein-S-yl)-2-phenylacetohydroximate + L-glutamate. Its pathway is secondary metabolite biosynthesis. Functionally, involved in glucosinolate biosynthesis. Hydrolyzes the gamma-glutamyl peptide bond of several glutathione (GSH) conjugates to produce Cys-Gly conjugates related to glucosinolates. The gamma-Glu-Cys-Gly-GSH conjugates are the sulfur-donating molecule in glucosinolate biosynthesis. Can use the GSH conjugate of the camalexin intermediate IAN (GS-IAN) as substrate. Required for the biosynthesis of camalexin, a pathogen-inducible phytoalexin with antibacterial and antifungal properties. This is Gamma-glutamyl peptidase 3 from Arabidopsis thaliana (Mouse-ear cress).